The following is a 247-amino-acid chain: Carboxy-S-adenosyl-L-methionine synthase (247 aa).

S-adenosyl-L-methionine is bound by residues Tyr40, 65–67 (GCS), 90–91 (DN), 122–123 (DI), Asn137, and Arg204.

It belongs to the class I-like SAM-binding methyltransferase superfamily. Cx-SAM synthase family. Homodimer.

The enzyme catalyses prephenate + S-adenosyl-L-methionine = carboxy-S-adenosyl-L-methionine + 3-phenylpyruvate + H2O. Catalyzes the conversion of S-adenosyl-L-methionine (SAM) to carboxy-S-adenosyl-L-methionine (Cx-SAM). In Pseudomonas syringae pv. tomato (strain ATCC BAA-871 / DC3000), this protein is Carboxy-S-adenosyl-L-methionine synthase.